The chain runs to 517 residues: ATP synthase subunit beta (517 aa).

Low complexity-rich tracts occupy residues 1–22 and 29–42; these read MAKA…AAKA and AKTA…APKA. The interval 1–42 is disordered; sequence MAKAATPKTTAAAEAKPAAAKAPAKKAPAKTAAAKSDAAPKA. 195 to 202 is an ATP binding site; it reads GGAGVGKT.

Belongs to the ATPase alpha/beta chains family. In terms of assembly, F-type ATPases have 2 components, CF(1) - the catalytic core - and CF(0) - the membrane proton channel. CF(1) has five subunits: alpha(3), beta(3), gamma(1), delta(1), epsilon(1). CF(0) has three main subunits: a(1), b(2) and c(9-12). The alpha and beta chains form an alternating ring which encloses part of the gamma chain. CF(1) is attached to CF(0) by a central stalk formed by the gamma and epsilon chains, while a peripheral stalk is formed by the delta and b chains.

The protein resides in the cell inner membrane. The catalysed reaction is ATP + H2O + 4 H(+)(in) = ADP + phosphate + 5 H(+)(out). Its function is as follows. Produces ATP from ADP in the presence of a proton gradient across the membrane. The catalytic sites are hosted primarily by the beta subunits. The polypeptide is ATP synthase subunit beta (Brucella anthropi (strain ATCC 49188 / DSM 6882 / CCUG 24695 / JCM 21032 / LMG 3331 / NBRC 15819 / NCTC 12168 / Alc 37) (Ochrobactrum anthropi)).